The sequence spans 336 residues: Peroxidase 20 (336 aa).

The first 24 residues, Met1–Gly24, serve as a signal peptide directing secretion. Cystine bridges form between Cys39/Cys119, Cys72/Cys77, Cys125/Cys331, and Cys204/Cys239. The Proton acceptor role is filled by His70. Positions 71, 74, 76, 78, and 80 each coordinate Ca(2+). Position 167 (Pro167) interacts with substrate. Asn170 carries an N-linked (GlcNAc...) asparagine glycan. His197 contacts heme b. Residue Thr198 participates in Ca(2+) binding. Residues Asp252, Thr255, and Asp260 each coordinate Ca(2+).

Belongs to the peroxidase family. Classical plant (class III) peroxidase subfamily. It depends on heme b as a cofactor. Ca(2+) is required as a cofactor.

The protein localises to the secreted. The enzyme catalyses 2 a phenolic donor + H2O2 = 2 a phenolic radical donor + 2 H2O. In terms of biological role, removal of H(2)O(2), oxidation of toxic reductants, biosynthesis and degradation of lignin, suberization, auxin catabolism, response to environmental stresses such as wounding, pathogen attack and oxidative stress. These functions might be dependent on each isozyme/isoform in each plant tissue. Its function is as follows. May be implicated in the systemic acquired resistance response via the salicylic acid signal transduction pathway. The polypeptide is Peroxidase 20 (PER20) (Arabidopsis thaliana (Mouse-ear cress)).